The following is a 523-amino-acid chain: Excitatory amino acid transporter 3 (523 aa).

Over 1–18 (MGKPTSSGCDWRRFLRNH) the chain is Cytoplasmic. A helical transmembrane segment spans residues 19–38 (WLLLSTVAAVVLGIVLGVVV). At 39–61 (RGHSELSNLDKFYFAFPGEILMR) the chain is on the extracellular side. A helical membrane pass occupies residues 62–82 (MLKLVILPLIVSSMITGVAAL). Over 83 to 93 (DSNVSGKIGLR) the chain is Cytoplasmic. Residues 94–114 (AVVYYFSTTVIAVILGIVLVV) traverse the membrane as a helical segment. Residues Tyr-98, Thr-101, and Thr-102 each contribute to the Na(+) site. Over 115 to 204 (SIKPGVTQKV…KTKEYKIVGL (90 aa)) the chain is Extracellular. Asn-128, Asn-178, and Asn-194 each carry an N-linked (GlcNAc...) asparagine glycan. A helical membrane pass occupies residues 205–228 (YSDGINVLGLIIFCLVFGLVIGKM). Residues 229–237 (GEKGQILVD) are Cytoplasmic-facing. A helical transmembrane segment spans residues 238-265 (FFNALSDATMKIVQIIMCYMPIGILFLI). Topologically, residues 266-285 (AGKIIEVEDWEIFRKLGLYM) are extracellular. The helical transmembrane segment at 286–307 (ATVLSGLAIHSLIVLPLLYFIV) threads the bilayer. At 308-312 (VRKNP) the chain is on the cytoplasmic side. The segment at residues 313 to 343 (FRFALGMAQALLTALMISSSSATLPVTFRCA) is an intramembrane region (discontinuously helical). Residues Ser-330 and Ser-332 each contribute to the L-aspartate site. Topologically, residues 344–352 (EEKNQVDKR) are cytoplasmic. A helical membrane pass occupies residues 353–379 (ITRFVLPVGATINMDGTALYEAVAAVF). Residues Gly-361, Thr-363, Asn-365, and Asp-367 each coordinate Na(+). Thr-369 contributes to the L-aspartate binding site. At 380-392 (IAQLNGLDLSIGQ) the chain is on the extracellular side. The discontinuously helical intramembrane region spans 393–426 (IVTISITATAASIGAAGVPQAGLVTMVIVLSAVG). Na(+) contacts are provided by Ser-404, Ile-405, and Ala-407. Val-410 contributes to the L-aspartate binding site. Residues 427–439 (LPAEDVTLIIAVD) are Extracellular-facing. A helical membrane pass occupies residues 440-461 (WLLDRFRTMVNVLGDAFGTGIV). The L-aspartate site is built by Arg-446, Thr-447, and Asn-450. Na(+) is bound by residues Asn-450 and Asp-454. Topologically, residues 462-523 (EKLSKKELEQ…TISFTQTSQF (62 aa)) are cytoplasmic. Phosphoserine occurs at positions 516 and 521.

This sequence belongs to the dicarboxylate/amino acid:cation symporter (DAACS) (TC 2.A.23) family. SLC1A1 subfamily. As to quaternary structure, homotrimer. Interacts with ARL6IP5. Interacts with RTN2 (via N-terminus); the interaction promotes cell surface expression of SLC1A1. Interacts with SORCS2; this interaction is important for normal expression at the cell membrane. As to expression, detected on neurons in the brain cortex, dentate gyrus and hippocampus CA2 region (at protein level). Expressed in whole brain, brain cortex, hippocampus, cerebellum, lung, kidney, small intestine and skeletal muscle. Expressed in the renal outer medulla, medullary ray and cortex (at protein level).

The protein resides in the cell membrane. Its subcellular location is the apical cell membrane. It localises to the synapse. The protein localises to the synaptosome. It is found in the early endosome membrane. The protein resides in the late endosome membrane. Its subcellular location is the recycling endosome membrane. It catalyses the reaction K(+)(in) + L-glutamate(out) + 3 Na(+)(out) + H(+)(out) = K(+)(out) + L-glutamate(in) + 3 Na(+)(in) + H(+)(in). The enzyme catalyses K(+)(in) + L-aspartate(out) + 3 Na(+)(out) + H(+)(out) = K(+)(out) + L-aspartate(in) + 3 Na(+)(in) + H(+)(in). The catalysed reaction is D-aspartate(out) + K(+)(in) + 3 Na(+)(out) + H(+)(out) = D-aspartate(in) + K(+)(out) + 3 Na(+)(in) + H(+)(in). It carries out the reaction K(+)(in) + L-cysteine(out) + 3 Na(+)(out) + H(+)(out) = K(+)(out) + L-cysteine(in) + 3 Na(+)(in) + H(+)(in). Sodium-dependent, high-affinity amino acid transporter that mediates the uptake of L-glutamate and also L-aspartate and D-aspartate. Can also transport L-cysteine. Functions as a symporter that transports one amino acid molecule together with two or three Na(+) ions and one proton, in parallel with the counter-transport of one K(+) ion. Mediates Cl(-) flux that is not coupled to amino acid transport; this avoids the accumulation of negative charges due to aspartate and Na(+) symport. Plays an important role in L-glutamate and L-aspartate reabsorption in renal tubuli. Plays a redundant role in the rapid removal of released glutamate from the synaptic cleft, which is essential for terminating the postsynaptic action of glutamate. Contributes to glutathione biosynthesis and protection against oxidative stress via its role in L-glutamate and L-cysteine transport. Negatively regulated by ARL6IP5. In Mus musculus (Mouse), this protein is Excitatory amino acid transporter 3 (Slc1a1).